The primary structure comprises 364 residues: Dual-specificity RNA methyltransferase RlmN (364 aa).

Glutamate 91 serves as the catalytic Proton acceptor. The 236-residue stretch at 102-337 folds into the Radical SAM core domain; the sequence is GTLRITQCLS…AIIRKSKGQD (236 aa). Cysteine 109 and cysteine 342 are joined by a disulfide. Residues cysteine 116, cysteine 120, and cysteine 123 each contribute to the [4Fe-4S] cluster site. S-adenosyl-L-methionine-binding positions include 169-170, serine 201, 223-225, and asparagine 299; these read GE and SLH. The active-site S-methylcysteine intermediate is the cysteine 342.

It belongs to the radical SAM superfamily. RlmN family. [4Fe-4S] cluster serves as cofactor.

It is found in the cytoplasm. It carries out the reaction adenosine(2503) in 23S rRNA + 2 reduced [2Fe-2S]-[ferredoxin] + 2 S-adenosyl-L-methionine = 2-methyladenosine(2503) in 23S rRNA + 5'-deoxyadenosine + L-methionine + 2 oxidized [2Fe-2S]-[ferredoxin] + S-adenosyl-L-homocysteine. It catalyses the reaction adenosine(37) in tRNA + 2 reduced [2Fe-2S]-[ferredoxin] + 2 S-adenosyl-L-methionine = 2-methyladenosine(37) in tRNA + 5'-deoxyadenosine + L-methionine + 2 oxidized [2Fe-2S]-[ferredoxin] + S-adenosyl-L-homocysteine. In terms of biological role, specifically methylates position 2 of adenine 2503 in 23S rRNA and position 2 of adenine 37 in tRNAs. m2A2503 modification seems to play a crucial role in the proofreading step occurring at the peptidyl transferase center and thus would serve to optimize ribosomal fidelity. The sequence is that of Dual-specificity RNA methyltransferase RlmN from Nitratidesulfovibrio vulgaris (strain DP4) (Desulfovibrio vulgaris).